The sequence spans 938 residues: Isoleucine--tRNA ligase (938 aa).

The 'HIGH' region motif lies at 58 to 68 (PYANGSIHIGH). Glu561 provides a ligand contact to L-isoleucyl-5'-AMP. The 'KMSKS' region signature appears at 602 to 606 (KMSKS). Lys605 provides a ligand contact to ATP. Positions 901, 904, 921, and 924 each coordinate Zn(2+).

Belongs to the class-I aminoacyl-tRNA synthetase family. IleS type 1 subfamily. As to quaternary structure, monomer. Zn(2+) is required as a cofactor.

The protein resides in the cytoplasm. It carries out the reaction tRNA(Ile) + L-isoleucine + ATP = L-isoleucyl-tRNA(Ile) + AMP + diphosphate. In terms of biological role, catalyzes the attachment of isoleucine to tRNA(Ile). As IleRS can inadvertently accommodate and process structurally similar amino acids such as valine, to avoid such errors it has two additional distinct tRNA(Ile)-dependent editing activities. One activity is designated as 'pretransfer' editing and involves the hydrolysis of activated Val-AMP. The other activity is designated 'posttransfer' editing and involves deacylation of mischarged Val-tRNA(Ile). The polypeptide is Isoleucine--tRNA ligase (Citrobacter koseri (strain ATCC BAA-895 / CDC 4225-83 / SGSC4696)).